The primary structure comprises 864 residues: Mitochondrial 15S rRNA processing factor CCM1 (864 aa).

The N-terminal 76 residues, 1 to 76 (MYMARCGPKN…REFSNTLKER (76 aa)), are a transit peptide targeting the mitochondrion. Composition is skewed to polar residues over residues 80-94 (TKSV…NSIA) and 102-112 (NVNVTKTSSVP). Positions 80–117 (TKSVNSDGHQSNSIAPISEDSRNVNVTKTSSVPNEEKS) are disordered. PPR repeat units follow at residues 319 to 353 (NKQN…STKH) and 356 to 390 (DICT…NIKP).

Belongs to the CCM1 family. As to quaternary structure, binds to mitochondrial small subunit 15S rRNA.

It localises to the mitochondrion. Functionally, regulates mitochondrial small subunit maturation by controlling 15S rRNA 5'-end processing. Localizes to the 5' precursor of the 15S rRNA in a position that is subsequently occupied by mS47 in the mature yeast mtSSU. Uses structure and sequence-specific RNA recognition, binding to a single-stranded region of the precursor and specifically recognizing bases -6 to -1. The exchange of Ccm1 for mS47 is coupled to the irreversible removal of precursor rRNA that is accompanied by conformational changes of the mitoribosomal proteins uS5m and mS26. These conformational changes signal completion of 5'-end rRNA processing through protection of the mature 5'-end of the 15S rRNA and stabilization of mS47. The removal of the 5' precursor together with the dissociation of Ccm1 may be catalyzed by the 5'-3' exoribonuclease Pet127. Involved in the specific removal of group I introns in mitochondrial encoded transcripts. The sequence is that of Mitochondrial 15S rRNA processing factor CCM1 from Saccharomyces cerevisiae (strain ATCC 204508 / S288c) (Baker's yeast).